A 321-amino-acid chain; its full sequence is Homoserine O-acetyltransferase (321 aa).

The Acyl-thioester intermediate role is filled by cysteine 142. Positions 163 and 192 each coordinate substrate. Histidine 235 serves as the catalytic Proton acceptor. Residue glutamate 237 is part of the active site. Arginine 249 contributes to the substrate binding site.

This sequence belongs to the MetA family.

It is found in the cytoplasm. It carries out the reaction L-homoserine + acetyl-CoA = O-acetyl-L-homoserine + CoA. It functions in the pathway amino-acid biosynthesis; L-methionine biosynthesis via de novo pathway; O-acetyl-L-homoserine from L-homoserine: step 1/1. Functionally, transfers an acetyl group from acetyl-CoA to L-homoserine, forming acetyl-L-homoserine. The polypeptide is Homoserine O-acetyltransferase (Lactococcus lactis subsp. lactis (strain IL1403) (Streptococcus lactis)).